Reading from the N-terminus, the 1464-residue chain is Gag-Pol polyprotein (1464 aa).

The N-myristoyl glycine; by host moiety is linked to residue G2. An interaction with Gp41 region spans residues 7 to 31 (VLRGKKADELEKIRLRPSGKKKYRL). The short motif at 16 to 22 (LEKIRLR) is the Nuclear export signal element. The short motif at 26–32 (KKKYRLK) is the Nuclear localization signal element. The disordered stretch occupies residues 108-146 (LGAETGTAEKMPSTSRPTAPPSGRGRNFPVQQTGGGNYI). An interaction with human PPIA/CYPA and NUP153 region spans residues 192–229 (NCVGDHQAAMQIIREIINDEAADWDAQHPIPGPLPAGQ). Positions 280–366 (YNPTNILDVK…GGPGQKARLM (87 aa)) are dimerization/Multimerization of capsid protein p24. 2 CCHC-type zinc fingers span residues 390-407 (IRCW…QCRA) and 411-428 (QGCW…KCPE). A disordered region spans residues 434–509 (LRDGSMGKEA…GKSTSQRGDR (76 aa)). Residues 459 to 468 (STPSRSSSGS) are compositionally biased toward low complexity. The span at 477-492 (ERAEGAEGETIQRGDG) shows a compositional bias: basic and acidic residues. Residues 514 to 518 (PQFSL) form a dimerization of protease region. One can recognise a Peptidase A2 domain in the interval 533–602 (VEVLLDTGAD…TPINIFGRNI (70 aa)). The active-site For protease activity; shared with dimeric partner is D538. 2 dimerization of protease regions span residues 562 to 568 (GIGGFIN) and 601 to 613 (NILT…LNLP). A Reverse transcriptase domain is found at 656-846 (EGQLEEAPPT…PPLQWMGYEL (191 aa)). D722, D797, and D798 together coordinate Mg(2+). Residues 839–847 (LQWMGYELW) are RT 'primer grip'. Positions 1009–1025 (WEQWWDNYWQVTWIPEW) match the Tryptophan repeat motif motif. The RNase H type-1 domain occupies 1045-1168 (IPGAETFYTD…VDHLVSQGIR (124 aa)). Positions 1054, 1089, 1109, and 1160 each coordinate Mg(2+). The Integrase-type zinc finger occupies 1174 to 1215 (ERIEPAQEEHEKYHSNMKELTHKFGIPQLVARQIVNTCAQCQ). Zn(2+) contacts are provided by H1183, H1187, C1211, and C1214. The Integrase catalytic domain occupies 1224 to 1375 (QVNAEIGVWQ…TPAERLINMI (152 aa)). Residues D1235, D1287, and E1323 each contribute to the Mg(2+) site. The integrase-type DNA-binding region spans 1394–1441 (FQVYYREGRDQLWKGPGELLWKGDGAVIVKVGADIKVIPRRKAKIIRD).

As to quaternary structure, homotrimer; further assembles as hexamers of trimers. Interacts with gp41 (via C-terminus). Interacts with host CALM1; this interaction induces a conformational change in the Matrix protein, triggering exposure of the myristate group. Interacts with host AP3D1; this interaction allows the polyprotein trafficking to multivesicular bodies during virus assembly. Part of the pre-integration complex (PIC) which is composed of viral genome, matrix protein, Vpr and integrase. In terms of assembly, homodimer; the homodimer further multimerizes as homohexamers or homopentamers. Interacts with human PPIA/CYPA. Interacts with human NUP153. Interacts with host PDZD8; this interaction stabilizes the capsid. Interacts with monkey TRIM5; this interaction destabilizes the capsid. Homodimer, whose active site consists of two apposed aspartic acid residues. As to quaternary structure, heterodimer of p66 RT and p51 RT (RT p66/p51). Heterodimerization of RT is essential for DNA polymerase activity. The overall folding of the subdomains is similar in p66 RT and p51 RT but the spatial arrangements of the subdomains are dramatically different. In terms of assembly, homotetramer; may further associate as a homohexadecamer. Part of the pre-integration complex (PIC) which is composed of viral genome, matrix protein, Vpr and integrase. Interacts with human SMARCB1/INI1 and human PSIP1/LEDGF isoform 1. Interacts with human KPNA3; this interaction might play a role in nuclear import of the pre-integration complex. Interacts with human NUP153; this interaction might play a role in nuclear import of the pre-integration complex. It depends on Mg(2+) as a cofactor. In terms of processing, specific enzymatic cleavages by the viral protease yield mature proteins. The protease is released by autocatalytic cleavage. The polyprotein is cleaved during and after budding, this process is termed maturation. Proteolytic cleavage of p66 RT removes the RNase H domain to yield the p51 RT subunit. Nucleocapsid protein p7 might be further cleaved after virus entry.

It localises to the host cell membrane. Its subcellular location is the host endosome. The protein localises to the host multivesicular body. It is found in the virion membrane. The protein resides in the host nucleus. It localises to the host cytoplasm. Its subcellular location is the virion. It catalyses the reaction Endopeptidase for which the P1 residue is preferably hydrophobic.. It carries out the reaction Endohydrolysis of RNA in RNA/DNA hybrids. Three different cleavage modes: 1. sequence-specific internal cleavage of RNA. Human immunodeficiency virus type 1 and Moloney murine leukemia virus enzymes prefer to cleave the RNA strand one nucleotide away from the RNA-DNA junction. 2. RNA 5'-end directed cleavage 13-19 nucleotides from the RNA end. 3. DNA 3'-end directed cleavage 15-20 nucleotides away from the primer terminus.. The catalysed reaction is 3'-end directed exonucleolytic cleavage of viral RNA-DNA hybrid.. The enzyme catalyses DNA(n) + a 2'-deoxyribonucleoside 5'-triphosphate = DNA(n+1) + diphosphate. With respect to regulation, protease: The viral protease is inhibited by many synthetic protease inhibitors (PIs), such as amprenavir, atazanavir, indinavir, loprinavir, nelfinavir, ritonavir and saquinavir. Use of protease inhibitors in tritherapy regimens permit more ambitious therapeutic strategies. Reverse transcriptase/ribonuclease H: RT can be inhibited either by nucleoside RT inhibitors (NRTIs) or by non nucleoside RT inhibitors (NNRTIs). NRTIs act as chain terminators, whereas NNRTIs inhibit DNA polymerization by binding a small hydrophobic pocket near the RT active site and inducing an allosteric change in this region. Classical NRTIs are abacavir, adefovir (PMEA), didanosine (ddI), lamivudine (3TC), stavudine (d4T), tenofovir (PMPA), zalcitabine (ddC), and zidovudine (AZT). Classical NNRTIs are atevirdine (BHAP U-87201E), delavirdine, efavirenz (DMP-266), emivirine (I-EBU), and nevirapine (BI-RG-587). The tritherapies used as a basic effective treatment of AIDS associate two NRTIs and one NNRTI. Its function is as follows. Mediates, with Gag polyprotein, the essential events in virion assembly, including binding the plasma membrane, making the protein-protein interactions necessary to create spherical particles, recruiting the viral Env proteins, and packaging the genomic RNA via direct interactions with the RNA packaging sequence (Psi). Gag-Pol polyprotein may regulate its own translation, by the binding genomic RNA in the 5'-UTR. At low concentration, the polyprotein would promote translation, whereas at high concentration, the polyprotein would encapsidate genomic RNA and then shut off translation. Functionally, targets the polyprotein to the plasma membrane via a multipartite membrane-binding signal, that includes its myristoylated N-terminus. Matrix protein is part of the pre-integration complex. Implicated in the release from host cell mediated by Vpu. Binds to RNA. Forms the conical core that encapsulates the genomic RNA-nucleocapsid complex in the virion. Most core are conical, with only 7% tubular. The core is constituted by capsid protein hexamer subunits. The core is disassembled soon after virion entry. Host restriction factors such as TRIM5-alpha or TRIMCyp bind retroviral capsids and cause premature capsid disassembly, leading to blocks in reverse transcription. Capsid restriction by TRIM5 is one of the factors which restricts HIV-1 to the human species. Host PIN1 apparently facilitates the virion uncoating. On the other hand, interactions with PDZD8 or CYPA stabilize the capsid. In terms of biological role, encapsulates and protects viral dimeric unspliced genomic RNA (gRNA). Binds these RNAs through its zinc fingers. Acts as a nucleic acid chaperone which is involved in rearangement of nucleic acid secondary structure during gRNA retrotranscription. Also facilitates template switch leading to recombination. As part of the polyprotein, participates in gRNA dimerization, packaging, tRNA incorporation and virion assembly. Its function is as follows. Aspartyl protease that mediates proteolytic cleavages of Gag and Gag-Pol polyproteins during or shortly after the release of the virion from the plasma membrane. Cleavages take place as an ordered, step-wise cascade to yield mature proteins. This process is called maturation. Displays maximal activity during the budding process just prior to particle release from the cell. Also cleaves Nef and Vif, probably concomitantly with viral structural proteins on maturation of virus particles. Hydrolyzes host EIF4GI and PABP1 in order to shut off the capped cellular mRNA translation. The resulting inhibition of cellular protein synthesis serves to ensure maximal viral gene expression and to evade host immune response. Functionally, multifunctional enzyme that converts the viral RNA genome into dsDNA in the cytoplasm, shortly after virus entry into the cell. This enzyme displays a DNA polymerase activity that can copy either DNA or RNA templates, and a ribonuclease H (RNase H) activity that cleaves the RNA strand of RNA-DNA heteroduplexes in a partially processive 3' to 5' endonucleasic mode. Conversion of viral genomic RNA into dsDNA requires many steps. A tRNA(3)-Lys binds to the primer-binding site (PBS) situated at the 5'-end of the viral RNA. RT uses the 3' end of the tRNA primer to perform a short round of RNA-dependent minus-strand DNA synthesis. The reading proceeds through the U5 region and ends after the repeated (R) region which is present at both ends of viral RNA. The portion of the RNA-DNA heteroduplex is digested by the RNase H, resulting in a ssDNA product attached to the tRNA primer. This ssDNA/tRNA hybridizes with the identical R region situated at the 3' end of viral RNA. This template exchange, known as minus-strand DNA strong stop transfer, can be either intra- or intermolecular. RT uses the 3' end of this newly synthesized short ssDNA to perform the RNA-dependent minus-strand DNA synthesis of the whole template. RNase H digests the RNA template except for two polypurine tracts (PPTs) situated at the 5'-end and near the center of the genome. It is not clear if both polymerase and RNase H activities are simultaneous. RNase H probably can proceed both in a polymerase-dependent (RNA cut into small fragments by the same RT performing DNA synthesis) and a polymerase-independent mode (cleavage of remaining RNA fragments by free RTs). Secondly, RT performs DNA-directed plus-strand DNA synthesis using the PPTs that have not been removed by RNase H as primers. PPTs and tRNA primers are then removed by RNase H. The 3' and 5' ssDNA PBS regions hybridize to form a circular dsDNA intermediate. Strand displacement synthesis by RT to the PBS and PPT ends produces a blunt ended, linear dsDNA copy of the viral genome that includes long terminal repeats (LTRs) at both ends. Catalyzes viral DNA integration into the host chromosome, by performing a series of DNA cutting and joining reactions. This enzyme activity takes place after virion entry into a cell and reverse transcription of the RNA genome in dsDNA. The first step in the integration process is 3' processing. This step requires a complex comprising the viral genome, matrix protein, Vpr and integrase. This complex is called the pre-integration complex (PIC). The integrase protein removes 2 nucleotides from each 3' end of the viral DNA, leaving recessed CA OH's at the 3' ends. In the second step, the PIC enters cell nucleus. This process is mediated through integrase and Vpr proteins, and allows the virus to infect a non dividing cell. This ability to enter the nucleus is specific of lentiviruses, other retroviruses cannot and rely on cell division to access cell chromosomes. In the third step, termed strand transfer, the integrase protein joins the previously processed 3' ends to the 5' ends of strands of target cellular DNA at the site of integration. The 5'-ends are produced by integrase-catalyzed staggered cuts, 5 bp apart. A Y-shaped, gapped, recombination intermediate results, with the 5'-ends of the viral DNA strands and the 3' ends of target DNA strands remaining unjoined, flanking a gap of 5 bp. The last step is viral DNA integration into host chromosome. This involves host DNA repair synthesis in which the 5 bp gaps between the unjoined strands are filled in and then ligated. Since this process occurs at both cuts flanking the HIV genome, a 5 bp duplication of host DNA is produced at the ends of HIV-1 integration. Alternatively, Integrase may catalyze the excision of viral DNA just after strand transfer, this is termed disintegration. The polypeptide is Gag-Pol polyprotein (gag-pol) (Homo sapiens (Human)).